Consider the following 342-residue polypeptide: Dihydroorotase (342 aa).

Zn(2+)-binding residues include histidine 13 and histidine 15. Substrate contacts are provided by residues histidine 15–arginine 17 and asparagine 41. Residues lysine 98, histidine 135, and histidine 173 each coordinate Zn(2+). Lysine 98 is subject to N6-carboxylysine. Histidine 135 serves as a coordination point for substrate. Substrate is bound at residue leucine 218. Aspartate 246 is a binding site for Zn(2+). The active site involves aspartate 246. Positions 250 and 262 each coordinate substrate.

The protein belongs to the metallo-dependent hydrolases superfamily. DHOase family. Class II DHOase subfamily. Homodimer. The cofactor is Zn(2+).

It carries out the reaction (S)-dihydroorotate + H2O = N-carbamoyl-L-aspartate + H(+). The protein operates within pyrimidine metabolism; UMP biosynthesis via de novo pathway; (S)-dihydroorotate from bicarbonate: step 3/3. Functionally, catalyzes the reversible cyclization of carbamoyl aspartate to dihydroorotate. The sequence is that of Dihydroorotase from Aliivibrio fischeri (strain ATCC 700601 / ES114) (Vibrio fischeri).